The following is a 962-amino-acid chain: Nonsense-mediated mRNA decay factor SMG8 (962 aa).

Residues 634 to 661 (RSPEISSQIASSGLSSRSNSTSSGTSSA) form a disordered region. A compositionally biased stretch (low complexity) spans 639-661 (SSQIASSGLSSRSNSTSSGTSSA).

Belongs to the SMG8 family.

Functionally, involved in nonsense-mediated decay (NMD) of mRNAs containing premature stop codons. Probable component of kinase complex containing nonC and recruited to stalled ribosomes. The polypeptide is Nonsense-mediated mRNA decay factor SMG8 (Drosophila virilis (Fruit fly)).